Consider the following 461-residue polypeptide: Cysteine--tRNA ligase (461 aa).

C28 contacts Zn(2+). A 'HIGH' region motif is present at residues I30–H40. C209, H234, and E238 together coordinate Zn(2+). The short motif at K266–S270 is the 'KMSKS' region element. K269 is an ATP binding site.

This sequence belongs to the class-I aminoacyl-tRNA synthetase family. Monomer. It depends on Zn(2+) as a cofactor.

It is found in the cytoplasm. It catalyses the reaction tRNA(Cys) + L-cysteine + ATP = L-cysteinyl-tRNA(Cys) + AMP + diphosphate. The chain is Cysteine--tRNA ligase from Yersinia pestis bv. Antiqua (strain Antiqua).